The following is a 219-amino-acid chain: Probable GTP-binding protein EngB (219 aa).

In terms of domain architecture, EngB-type G spans Val-31 to Pro-205. Residues Gly-39 to Ser-46, Gly-66 to Leu-70, Asp-84 to Gly-87, Thr-151 to Asp-154, and Phe-184 to Ser-186 contribute to the GTP site. Mg(2+)-binding residues include Ser-46 and Thr-68.

It belongs to the TRAFAC class TrmE-Era-EngA-EngB-Septin-like GTPase superfamily. EngB GTPase family. The cofactor is Mg(2+).

Functionally, necessary for normal cell division and for the maintenance of normal septation. In Shewanella denitrificans (strain OS217 / ATCC BAA-1090 / DSM 15013), this protein is Probable GTP-binding protein EngB.